The primary structure comprises 146 residues: Ribonuclease H (146 aa).

In terms of domain architecture, RNase H type-1 spans 4–145; that stretch reads ELNKVVIYTD…ADMLARSQIV (142 aa). Mg(2+) contacts are provided by Asp13, Glu51, Asp73, and Asp137.

It belongs to the RNase H family. In terms of assembly, monomer. The cofactor is Mg(2+).

It localises to the cytoplasm. It carries out the reaction Endonucleolytic cleavage to 5'-phosphomonoester.. Its function is as follows. Endonuclease that specifically degrades the RNA of RNA-DNA hybrids. This Ehrlichia chaffeensis (strain ATCC CRL-10679 / Arkansas) protein is Ribonuclease H.